The chain runs to 265 residues: uncharacterized protein (265 aa).

2 disordered regions span residues 62–94 (RNKK…ALGK) and 118–149 (MVPG…RPNP). The segment covering 126 to 139 (DGPKKSDTDIKDAV) has biased composition (basic and acidic residues).

This is an uncharacterized protein from Homo sapiens (Human).